A 1001-amino-acid chain; its full sequence is UPF0182 protein Mjls_1469 (1001 aa).

Helical transmembrane passes span 16–36, 61–81, 112–132, 174–194, 209–229, 258–278, and 286–306; these read VLIGVALAAVVLLLIGPRFID, VVVFLVVSLLIGAIVFAGLAL, LFGFGVPAFIGILSGIVAQSY, FVATFLAFIANLLGHYLFGGI, IQLVTLVGILILLKAFAYWLD, KLILLAIAVICAVAVFSAIVL, and IGVVLLLLSSLVVGAGWPLVV. Residues 900–929 are compositionally biased toward low complexity; sequence ATGPAPANLPDGQPAAQPPNGQQPAAQTPG. The interval 900–977 is disordered; that stretch reads ATGPAPANLP…MSGLQDAQRS (78 aa).

This sequence belongs to the UPF0182 family.

The protein resides in the cell membrane. This is UPF0182 protein Mjls_1469 from Mycobacterium sp. (strain JLS).